The chain runs to 882 residues: Translation initiation factor IF-2 (882 aa).

The interval 28-294 (GIRKSADDSV…SSLQQGFQKP (267 aa)) is disordered. Residues 67–81 (STLNIPGTGGKSKSV) show a composition bias toward polar residues. Residues 92–209 (VKRDPQEAER…RMAEENKWTD (118 aa)) are compositionally biased toward basic and acidic residues. The segment covering 244-258 (GRGRNAKAARPKKGN) has biased composition (basic residues). Positions 259–272 (KHAESKADREEARA) are enriched in basic and acidic residues. The tr-type G domain occupies 381-550 (PRAPVVTIMG…LLQAEVLELK (170 aa)). Positions 390–397 (GHVDHGKT) are G1. 390-397 (GHVDHGKT) is a binding site for GTP. The segment at 415 to 419 (GITQH) is G2. Residues 436 to 439 (DTPG) are G3. GTP-binding positions include 436-440 (DTPGH) and 490-493 (NKID). A G4 region spans residues 490–493 (NKID). Positions 526 to 528 (SAK) are G5. Lys-800 bears the N6-acetyllysine mark.

This sequence belongs to the TRAFAC class translation factor GTPase superfamily. Classic translation factor GTPase family. IF-2 subfamily.

It is found in the cytoplasm. One of the essential components for the initiation of protein synthesis. Protects formylmethionyl-tRNA from spontaneous hydrolysis and promotes its binding to the 30S ribosomal subunits. Also involved in the hydrolysis of GTP during the formation of the 70S ribosomal complex. The sequence is that of Translation initiation factor IF-2 from Shigella flexneri serotype 5b (strain 8401).